We begin with the raw amino-acid sequence, 327 residues long: Glycerol-3-phosphate dehydrogenase [NAD(P)+] (327 aa).

NADPH is bound by residues W11, H30, and K103. Sn-glycerol 3-phosphate contacts are provided by K103, G131, and S133. A135 contributes to the NADPH binding site. Residues K186, D243, S253, R254, and N255 each contribute to the sn-glycerol 3-phosphate site. K186 (proton acceptor) is an active-site residue. R254 lines the NADPH pocket. The NADPH site is built by V281 and E283.

It belongs to the NAD-dependent glycerol-3-phosphate dehydrogenase family.

The protein localises to the cytoplasm. It carries out the reaction sn-glycerol 3-phosphate + NAD(+) = dihydroxyacetone phosphate + NADH + H(+). The enzyme catalyses sn-glycerol 3-phosphate + NADP(+) = dihydroxyacetone phosphate + NADPH + H(+). The protein operates within membrane lipid metabolism; glycerophospholipid metabolism. Functionally, catalyzes the reduction of the glycolytic intermediate dihydroxyacetone phosphate (DHAP) to sn-glycerol 3-phosphate (G3P), the key precursor for phospholipid synthesis. In Wolbachia sp. subsp. Brugia malayi (strain TRS), this protein is Glycerol-3-phosphate dehydrogenase [NAD(P)+].